A 697-amino-acid chain; its full sequence is Potassium-transporting ATPase ATP-binding subunit (697 aa).

4 consecutive transmembrane segments (helical) span residues 55–75, 79–99, 245–265, and 271–291; these read PIMFVVEIGFIITFILSFLPS, SIPGWFNITVSLILLFTVLFA, LTLIFLIVVVTLPIFTNYLGF, and VLVALLVCLIPTTIGGLLSAI. Catalysis depends on Asp324, which acts as the 4-aspartylphosphate intermediate. Residues Asp361, Glu365, 393 to 400, and Lys412 each bind ATP; that span reads FKAETRMS. Residues Asp535 and Asp539 each coordinate Mg(2+). Transmembrane regions (helical) follow at residues 605–625, 633–653, and 677–697; these read FAIIPAMFTLAIPQMEALNIM, AILSALIFNAVIIPLLIPLAM, and GGVIVPFIGIKVIDIIVGLFI.

The protein belongs to the cation transport ATPase (P-type) (TC 3.A.3) family. Type IA subfamily. In terms of assembly, the system is composed of three essential subunits: KdpA, KdpB and KdpC.

Its subcellular location is the cell membrane. The enzyme catalyses K(+)(out) + ATP + H2O = K(+)(in) + ADP + phosphate + H(+). In terms of biological role, part of the high-affinity ATP-driven potassium transport (or Kdp) system, which catalyzes the hydrolysis of ATP coupled with the electrogenic transport of potassium into the cytoplasm. This subunit is responsible for energy coupling to the transport system and for the release of the potassium ions to the cytoplasm. This is Potassium-transporting ATPase ATP-binding subunit from Bacillus cereus (strain G9842).